The chain runs to 226 residues: Fibrillarin-like rRNA/tRNA 2'-O-methyltransferase (226 aa).

Residues 85–86 (TT), 104–105 (EF), 129–130 (DA), and 149–152 (DVAQ) each bind S-adenosyl-L-methionine.

Belongs to the methyltransferase superfamily. Fibrillarin family. In terms of assembly, interacts with nop5. Component of box C/D small ribonucleoprotein (sRNP) particles that contain rpl7ae, FlpA and nop5, plus a guide RNA.

Its function is as follows. Involved in pre-rRNA and tRNA processing. Utilizes the methyl donor S-adenosyl-L-methionine to catalyze the site-specific 2'-hydroxyl methylation of ribose moieties in rRNA and tRNA. Site specificity is provided by a guide RNA that base pairs with the substrate. Methylation occurs at a characteristic distance from the sequence involved in base pairing with the guide RNA. The protein is Fibrillarin-like rRNA/tRNA 2'-O-methyltransferase of Thermococcus gammatolerans (strain DSM 15229 / JCM 11827 / EJ3).